Consider the following 148-residue polypeptide: Lysozyme C (148 aa).

A signal peptide spans 1 to 18 (MKAVIILGLVLLSVTVQG). Residues 19 to 148 (KIFERCELAR…VSQYVQGCGV (130 aa)) enclose the C-type lysozyme domain. Cystine bridges form between Cys24/Cys146, Cys48/Cys134, Cys83/Cys99, and Cys95/Cys113. Active-site residues include Glu53 and Asp71.

The protein belongs to the glycosyl hydrolase 22 family. Monomer.

The protein localises to the secreted. It catalyses the reaction Hydrolysis of (1-&gt;4)-beta-linkages between N-acetylmuramic acid and N-acetyl-D-glucosamine residues in a peptidoglycan and between N-acetyl-D-glucosamine residues in chitodextrins.. In terms of biological role, lysozymes have primarily a bacteriolytic function; those in tissues and body fluids are associated with the monocyte-macrophage system and enhance the activity of immunoagents. The polypeptide is Lysozyme C (LYZ) (Macaca mulatta (Rhesus macaque)).